The primary structure comprises 24 residues: Unknown protein 3 (24 aa).

The chain is Unknown protein 3 from Pseudotsuga menziesii (Douglas-fir).